The chain runs to 648 residues: Threonine--tRNA ligase (648 aa).

A TGS domain is found at 1–63 (MSQISLTFPD…AASGRIAINT (63 aa)). The catalytic stretch occupies residues 247-544 (DHRKLGREME…LIENYSGKLP (298 aa)). Residues Cys344, His395, and His521 each coordinate Zn(2+).

This sequence belongs to the class-II aminoacyl-tRNA synthetase family. As to quaternary structure, homodimer. Zn(2+) serves as cofactor.

It localises to the cytoplasm. The catalysed reaction is tRNA(Thr) + L-threonine + ATP = L-threonyl-tRNA(Thr) + AMP + diphosphate + H(+). Functionally, catalyzes the attachment of threonine to tRNA(Thr) in a two-step reaction: L-threonine is first activated by ATP to form Thr-AMP and then transferred to the acceptor end of tRNA(Thr). Also edits incorrectly charged L-seryl-tRNA(Thr). The chain is Threonine--tRNA ligase from Paracoccus denitrificans (strain Pd 1222).